The following is a 485-amino-acid chain: Aspartyl/glutamyl-tRNA(Asn/Gln) amidotransferase subunit B (485 aa).

This sequence belongs to the GatB/GatE family. GatB subfamily. In terms of assembly, heterotrimer of A, B and C subunits.

It carries out the reaction L-glutamyl-tRNA(Gln) + L-glutamine + ATP + H2O = L-glutaminyl-tRNA(Gln) + L-glutamate + ADP + phosphate + H(+). The enzyme catalyses L-aspartyl-tRNA(Asn) + L-glutamine + ATP + H2O = L-asparaginyl-tRNA(Asn) + L-glutamate + ADP + phosphate + 2 H(+). Its function is as follows. Allows the formation of correctly charged Asn-tRNA(Asn) or Gln-tRNA(Gln) through the transamidation of misacylated Asp-tRNA(Asn) or Glu-tRNA(Gln) in organisms which lack either or both of asparaginyl-tRNA or glutaminyl-tRNA synthetases. The reaction takes place in the presence of glutamine and ATP through an activated phospho-Asp-tRNA(Asn) or phospho-Glu-tRNA(Gln). This Rhodospirillum rubrum (strain ATCC 11170 / ATH 1.1.1 / DSM 467 / LMG 4362 / NCIMB 8255 / S1) protein is Aspartyl/glutamyl-tRNA(Asn/Gln) amidotransferase subunit B.